The primary structure comprises 247 residues: ATP synthase subunit a, chloroplastic (247 aa).

The next 5 membrane-spanning stretches (helical) occupy residues Q38–V58, V95–L115, I134–A154, L199–L219, and G220–G240.

The protein belongs to the ATPase A chain family. As to quaternary structure, F-type ATPases have 2 components, CF(1) - the catalytic core - and CF(0) - the membrane proton channel. CF(1) has five subunits: alpha(3), beta(3), gamma(1), delta(1), epsilon(1). CF(0) has four main subunits: a, b, b' and c.

The protein localises to the plastid. The protein resides in the chloroplast thylakoid membrane. Key component of the proton channel; it plays a direct role in the translocation of protons across the membrane. In Trachelium caeruleum (Blue throatwort), this protein is ATP synthase subunit a, chloroplastic.